A 173-amino-acid chain; its full sequence is Shikimate kinase 2 (173 aa).

12 to 17 serves as a coordination point for ATP; that stretch reads GCGKTT. Thr16 and Asp32 together coordinate Mg(2+). Residues Asp34, Arg58, and Gly79 each coordinate substrate. The LID domain stretch occupies residues 112-126; that stretch reads QASPQAHQRPTLTGR. Residue Arg120 coordinates ATP. Arg139 contacts substrate. Position 155 (Gln155) interacts with ATP.

As to quaternary structure, monomer. Mg(2+) is required as a cofactor.

The protein resides in the cytoplasm. The catalysed reaction is shikimate + ATP = 3-phosphoshikimate + ADP + H(+). It functions in the pathway metabolic intermediate biosynthesis; chorismate biosynthesis; chorismate from D-erythrose 4-phosphate and phosphoenolpyruvate: step 5/7. Inhibited by chloride and sulfate ions. In terms of biological role, catalyzes the specific phosphorylation of the 3-hydroxyl group of shikimic acid using ATP as a cosubstrate. This Dickeya chrysanthemi (Pectobacterium chrysanthemi) protein is Shikimate kinase 2 (aroL).